A 295-amino-acid chain; its full sequence is tRNA-cytidine(32) 2-sulfurtransferase (295 aa).

The PP-loop motif signature appears at 63–68 (SGGKDS). Residues C138, C141, and C229 each contribute to the [4Fe-4S] cluster site.

It belongs to the TtcA family. As to quaternary structure, homodimer. Requires Mg(2+) as cofactor. It depends on [4Fe-4S] cluster as a cofactor.

It localises to the cytoplasm. It carries out the reaction cytidine(32) in tRNA + S-sulfanyl-L-cysteinyl-[cysteine desulfurase] + AH2 + ATP = 2-thiocytidine(32) in tRNA + L-cysteinyl-[cysteine desulfurase] + A + AMP + diphosphate + H(+). It functions in the pathway tRNA modification. Its function is as follows. Catalyzes the ATP-dependent 2-thiolation of cytidine in position 32 of tRNA, to form 2-thiocytidine (s(2)C32). The sulfur atoms are provided by the cysteine/cysteine desulfurase (IscS) system. This chain is tRNA-cytidine(32) 2-sulfurtransferase, found in Mesorhizobium japonicum (strain LMG 29417 / CECT 9101 / MAFF 303099) (Mesorhizobium loti (strain MAFF 303099)).